A 43-amino-acid polypeptide reads, in one-letter code: DeltaKappa-actitoxin-Avd4b (43 aa).

3 cysteine pairs are disulfide-bonded: C4/C39, C6/C32, and C22/C40.

This sequence belongs to the sea anemone type 3 (BDS) potassium channel toxin family.

The protein localises to the secreted. Its subcellular location is the nematocyst. Functionally, acts as a gating modifier on both Kv and Nav ion channels. Voltage-dependently inhibits voltage-gated potassium channels Kv3 (Kv3.1/KCNC1, Kv3.2/KCNC2 and Kv3.4/KCNC4). Slows inactivation of the voltage-gated sodium channel Nav1.7/SCN9A. Inhibits all Kv3.1, Kv3.2 and Kv3.4 by about 50% when tested at a voltage of +40 mV. May act by binding residues in voltage-sensing domains S3b and S4 of Kv3. Tests have been done on human Nav1.7/SCN9A and rat SCG neurons that mostly carry Nav1.7 channels (EC(50)=300 nM). This toxin also reduces blood pressure. The chain is DeltaKappa-actitoxin-Avd4b from Anemonia sulcata (Mediterranean snakelocks sea anemone).